Here is a 244-residue protein sequence, read N- to C-terminus: Probable septum site-determining protein MinC (244 aa).

Belongs to the MinC family. As to quaternary structure, interacts with MinD and FtsZ.

In terms of biological role, cell division inhibitor that blocks the formation of polar Z ring septums. Rapidly oscillates between the poles of the cell to destabilize FtsZ filaments that have formed before they mature into polar Z rings. Prevents FtsZ polymerization. This Dichelobacter nodosus (strain VCS1703A) protein is Probable septum site-determining protein MinC.